Consider the following 686-residue polypeptide: Antigen peptide transporter 2 (686 aa).

Residues 1-6 are Lumenal-facing; sequence MRLPDL. The helical transmembrane segment at 7 to 27 threads the bilayer; that stretch reads RPWTSLLLVDAALLWLLQGPL. The Cytoplasmic portion of the chain corresponds to 28–56; the sequence is GTLLPQGLPGLWLEGTLRLGGLWGLLKLR. Residues 57-77 form a helical membrane-spanning segment; it reads GLLGFVGTLLLPLCLATPLTV. The Lumenal segment spans residues 78–98; sequence SLRALVAGASRAPPARVASAP. A helical membrane pass occupies residues 99–119; the sequence is WSWLLVGYGAAGLSWSLWAVL. Topologically, residues 120-148 are cytoplasmic; sequence SPPGAQEKEQDQVNNKVLMWRLLKLSRPD. Residues 149 to 169 traverse the membrane as a helical segment; the sequence is LPLLVAAFFFLVLAVLGETLI. In terms of domain architecture, ABC transmembrane type-1 spans 152 to 435; the sequence is LVAAFFFLVL…LVYIYGDMLS (284 aa). The Lumenal portion of the chain corresponds to 170 to 187; it reads PHYSGRVIDILGGDFDPH. Residues 188-208 form a helical membrane-spanning segment; that stretch reads AFASAIFFMCLFSFGSSLSAG. The Cytoplasmic segment spans residues 209-266; it reads CRGGCFTYTMSRINLRIREQLFSSLLRQDLGFFQETKTGELNSRLSSDTTLMSNWLPL. A helical transmembrane segment spans residues 267 to 287; it reads NANVLLRSLVKVVGLYGFMLS. The Lumenal portion of the chain corresponds to 288 to 293; sequence ISPRLT. A helical transmembrane segment spans residues 294–314; it reads LLSLLHMPFTIAAEKVYNTRH. The tract at residues 301–389 is part of the peptide-binding site; the sequence is PFTIAAEKVY…RRVLHLGVQM (89 aa). Residues 315–374 lie on the Cytoplasmic side of the membrane; it reads QEVLREIQDAVARAGQVVREAVGGLQTVRSFGAEEHEVCRYKEALEQCRQLYWRRDLERA. Residues 375 to 395 form a helical membrane-spanning segment; the sequence is LYLLVRRVLHLGVQMLMLSCG. Residues 396–408 lie on the Lumenal side of the membrane; that stretch reads LQQMQDGELTQGS. Residues 409–429 form a helical membrane-spanning segment; the sequence is LLSFMIYQESVGSYVQTLVYI. Positions 414–433 are part of the peptide-binding site; it reads IYQESVGSYVQTLVYIYGDM. The Cytoplasmic segment spans residues 430–686; the sequence is YGDMLSNVGA…EGKLQKLAQL (257 aa). Residues 468-686 form the ABC transporter domain; that stretch reads VKFQDVSFAY…EGKLQKLAQL (219 aa). Residue 503-510 coordinates ATP; the sequence is GPNGSGKS.

The protein belongs to the ABC transporter superfamily. ABCB family. MHC peptide exporter (TC 3.A.1.209) subfamily. In terms of assembly, heterodimer of TAP1 and TAP2 (TAP1-TAP2). A component of the peptide loading complex (PLC), interacts via TAPBP with MHCI heterodimer; this interaction mediates peptide-MHCI assembly. Recruits TAPBP in a 1:1 stoichiometry. Interacts with classical MHCI such as HLA-A*02-B2M; this interaction is obligatory for the loading of peptide epitopes. Interacts with non-classical MHCI molecules including HLA-E-B2M and HLA-F-B2M as well as PLC component CALR before the peptide loading. (Microbial infection) Interacts with Epstein-Barr virus BLNF2a. As to quaternary structure, (Microbial infection) Interacts with herpes simplex virus US12/ICP47. In terms of assembly, (Microbial infection) Interacts with adenovirus E3-19K glycoprotein, which binds TAP1-TAP2 and acts as a TAPBP inhibitor, preventing TAP1-TAP2 association with MHCI. The cofactor is Mg(2+).

The protein resides in the endoplasmic reticulum membrane. The catalysed reaction is a peptide antigen(in) + ATP + H2O = a peptide antigen(out) + ADP + phosphate + H(+). With respect to regulation, inhibited at high ER lumenal peptide concentrations. (Microbial infection) Inhibited by herpes simplex virus US12/ICP47 protein, which blocks the peptide-binding site of TAP1-TAP2. Its activity is regulated as follows. (Microbial infection) Inhibited by human cytomegalovirus US6 glycoprotein, which binds to the lumenal side of TAP1-TAP2 complex and inhibits peptide translocation by specifically blocking ATP-binding and preventing TAP1-TAP2 conformational rearrangement induced by peptide binding. In terms of biological role, ABC transporter associated with antigen processing. In complex with TAP1 mediates unidirectional translocation of peptide antigens from cytosol to endoplasmic reticulum (ER) for loading onto MHC class I (MHCI) molecules. Uses the chemical energy of ATP to export peptides against the concentration gradient. During the transport cycle alternates between 'inward-facing' state with peptide binding site facing the cytosol to 'outward-facing' state with peptide binding site facing the ER lumen. Peptide antigen binding to ATP-loaded TAP1-TAP2 induces a switch to hydrolysis-competent 'outward-facing' conformation ready for peptide loading onto nascent MHCI molecules. Subsequently ATP hydrolysis resets the transporter to the 'inward facing' state for a new cycle. Typically transports intracellular peptide antigens of 8 to 13 amino acids that arise from cytosolic proteolysis via IFNG-induced immunoproteasome. Binds peptides with free N- and C-termini, the first three and the C-terminal residues being critical. Preferentially selects peptides having a highly hydrophobic residue at position 3 and hydrophobic or charged residues at the C-terminal anchor. Proline at position 2 has the most destabilizing effect. As a component of the peptide loading complex (PLC), acts as a molecular scaffold essential for peptide-MHCI assembly and antigen presentation. In Homo sapiens (Human), this protein is Antigen peptide transporter 2.